A 351-amino-acid chain; its full sequence is Probable cell division control protein 7 homolog 2 (351 aa).

The Protein kinase domain maps to 21–341 (YTPIEKIGEG…ASDALSHPFF (321 aa)). Residues 27–35 (IGEGSFSVV) and Lys-50 each bind ATP. Asp-137 serves as the catalytic Proton acceptor.

The protein belongs to the protein kinase superfamily. Ser/Thr protein kinase family. CDC7 subfamily. It depends on Mg(2+) as a cofactor.

The catalysed reaction is L-seryl-[protein] + ATP = O-phospho-L-seryl-[protein] + ADP + H(+). It catalyses the reaction L-threonyl-[protein] + ATP = O-phospho-L-threonyl-[protein] + ADP + H(+). Its function is as follows. Serine/threonine-protein kinase. Needed for the initiation of DNA synthesis during mitosis as well as for synaptonemal complex formation and commitment to recombination during meiosis. This is Probable cell division control protein 7 homolog 2 (CDC7-2) from Encephalitozoon cuniculi (strain GB-M1) (Microsporidian parasite).